The sequence spans 248 residues: NH(3)-dependent NAD(+) synthetase (248 aa).

31-38 (GLSGGVDS) provides a ligand contact to ATP. Position 37 (Asp-37) interacts with Mg(2+). Position 114 (Arg-114) interacts with deamido-NAD(+). Thr-134 is an ATP binding site. Glu-139 is a Mg(2+) binding site. Deamido-NAD(+) is bound by residues Lys-147 and Asp-154. ATP contacts are provided by Lys-163 and Thr-185. 232-233 (HK) lines the deamido-NAD(+) pocket.

It belongs to the NAD synthetase family. As to quaternary structure, homodimer.

It catalyses the reaction deamido-NAD(+) + NH4(+) + ATP = AMP + diphosphate + NAD(+) + H(+). It functions in the pathway cofactor biosynthesis; NAD(+) biosynthesis; NAD(+) from deamido-NAD(+) (ammonia route): step 1/1. Catalyzes the ATP-dependent amidation of deamido-NAD to form NAD. Uses ammonia as a nitrogen source. The polypeptide is NH(3)-dependent NAD(+) synthetase (Mycoplasma pneumoniae (strain ATCC 29342 / M129 / Subtype 1) (Mycoplasmoides pneumoniae)).